A 227-amino-acid chain; its full sequence is MKSLASPPCLRLIPTAHRQLNSRQSSSACYIHGGSSVNKSNNLSFSSSTSGFASPLAVEKELRSSFVQTAAVRHVTGSLIRGEGLRFAIVVARFNEVVTKLLLEGAIETFKKYSVREEDIEVIWVPGSFEIGVVAQNLGKSGKFHAVLCIGAVIRGDTTHYDAVANSAASGVLSASINSGVPCIFGVLTCEDMDQALNRSGGKAGNKGAETALTALEMASLFEHHLK.

The transit peptide at 1–71 (MKSLASPPCL…LRSSFVQTAA (71 aa)) directs the protein to the chloroplast. 5-amino-6-(D-ribitylamino)uracil is bound by residues F94, 128–130 (SFE), and 152–154 (AVI). Residue 157–158 (DT) coordinates (2S)-2-hydroxy-3-oxobutyl phosphate. The Proton donor role is filled by H160. F185 serves as a coordination point for 5-amino-6-(D-ribitylamino)uracil. Residue R199 participates in (2S)-2-hydroxy-3-oxobutyl phosphate binding.

It belongs to the DMRL synthase family. Oligomer forming an icosahedral capsid.

Its subcellular location is the plastid. The protein localises to the chloroplast. It carries out the reaction (2S)-2-hydroxy-3-oxobutyl phosphate + 5-amino-6-(D-ribitylamino)uracil = 6,7-dimethyl-8-(1-D-ribityl)lumazine + phosphate + 2 H2O + H(+). Its pathway is cofactor biosynthesis; riboflavin biosynthesis; riboflavin from 2-hydroxy-3-oxobutyl phosphate and 5-amino-6-(D-ribitylamino)uracil: step 1/2. Catalyzes the formation of 6,7-dimethyl-8-ribityllumazine by condensation of 5-amino-6-(D-ribitylamino)uracil with 3,4-dihydroxy-2-butanone 4-phosphate. This is the penultimate step in the biosynthesis of riboflavin. The sequence is that of 6,7-dimethyl-8-ribityllumazine synthase, chloroplastic from Arabidopsis thaliana (Mouse-ear cress).